The primary structure comprises 185 residues: Threonylcarbamoyl-AMP synthase (185 aa).

The YrdC-like domain occupies 4 to 185 (SWRVQQAARE…LATGNIVRPA (182 aa)).

This sequence belongs to the SUA5 family. TsaC subfamily.

The protein resides in the cytoplasm. The enzyme catalyses L-threonine + hydrogencarbonate + ATP = L-threonylcarbamoyladenylate + diphosphate + H2O. Its function is as follows. Required for the formation of a threonylcarbamoyl group on adenosine at position 37 (t(6)A37) in tRNAs that read codons beginning with adenine. Catalyzes the conversion of L-threonine, HCO(3)(-)/CO(2) and ATP to give threonylcarbamoyl-AMP (TC-AMP) as the acyladenylate intermediate, with the release of diphosphate. The polypeptide is Threonylcarbamoyl-AMP synthase (Pseudomonas fluorescens (strain Pf0-1)).